The sequence spans 257 residues: Snake venom serine protease BITS01A (257 aa).

The first 18 residues, 1 to 18 (MVLIRVIANLLILQVSYA), serve as a signal peptide directing secretion. A propeptide spanning residues 19–24 (QKSSEL) is cleaved from the precursor. The Peptidase S1 domain occupies 25-248 (VVGGDECDIN…YLPWIQSIIA (224 aa)). 6 disulfides stabilise this stretch: C31–C162, C49–C65, C97–C255, C141–C209, C173–C188, and C199–C224. H64 (charge relay system) is an active-site residue. N-linked (GlcNAc...) asparagine glycosylation occurs at N101. D109 acts as the Charge relay system in catalysis. N-linked (GlcNAc...) asparagine glycans are attached at residues N121, N153, and N169. The active-site Charge relay system is S203. N210 and N250 each carry an N-linked (GlcNAc...) asparagine glycan.

The protein belongs to the peptidase S1 family. Snake venom subfamily. Monomer. Expressed by the venom gland.

It is found in the secreted. Snake venom serine protease that may act in the hemostasis system of the prey. The sequence is that of Snake venom serine protease BITS01A from Bothrops insularis (Golden lancehead).